The chain runs to 158 residues: Proteinase inhibitor type-2 (158 aa).

The first 24 residues, methionine 1 to alanine 24, serve as a signal peptide directing secretion. 2 repeat units span residues aspartate 29–asparagine 86 and proline 87–lysine 146. 8 cysteine pairs are disulfide-bonded: cysteine 33–cysteine 121, cysteine 37–cysteine 117, cysteine 45–cysteine 127, cysteine 57–cysteine 94, cysteine 60–cysteine 78, cysteine 61–cysteine 90, cysteine 67–cysteine 103, and cysteine 120–cysteine 138.

This sequence belongs to the protease inhibitor I20 (potato type II proteinase inhibitor) family.

This is Proteinase inhibitor type-2 from Solanum tuberosum (Potato).